Here is a 97-residue protein sequence, read N- to C-terminus: Mapk-regulated corepressor-interacting protein 1 (97 aa).

The segment covering 1 to 26 has biased composition (polar residues); it reads MTSSSTPRMHTYKRTSSPRSPTNTGE. 2 disordered regions span residues 1–27 and 54–97; these read MTSS…TGEL and QNHE…SKKS. Composition is skewed to basic and acidic residues over residues 54 to 68 and 84 to 97; these read QNHE…EYVE and SDLK…SKKS. The PXDLS motif signature appears at 80 to 84; sequence PVDLS.

Belongs to the MCRIP family.

It localises to the nucleus. The protein resides in the cytoplasm. It is found in the stress granule. In terms of biological role, may play a role in the regulation of the epithelial-mesenchymal transition. This chain is Mapk-regulated corepressor-interacting protein 1 (mcrip1), found in Danio rerio (Zebrafish).